The chain runs to 557 residues: uncharacterized protein (557 aa).

A signal peptide spans 1-30 (MAPRRRRHTRIAGLRVVGTATLVAATTLTA). Residue Cys31 is the site of N-palmitoyl cysteine attachment. The S-diacylglycerol cysteine moiety is linked to residue Cys31.

This sequence to M.bovis Mb2616c and M.leprae ML0489.

Its subcellular location is the cell membrane. This is an uncharacterized protein from Mycobacterium tuberculosis (strain ATCC 25618 / H37Rv).